A 510-amino-acid polypeptide reads, in one-letter code: ETS translocation variant 5 (510 aa).

The interval F131 to P208 is disordered. The span at G161–P174 shows a compositional bias: low complexity. The span at A175–G185 shows a compositional bias: pro residues. S248 is modified (phosphoserine). K350 participates in a covalent cross-link: Glycyl lysine isopeptide (Lys-Gly) (interchain with G-Cter in SUMO2). A DNA-binding region (ETS) is located at residues L368–V448.

Interacts (via C-terminal) with ZMYM5 (via N-terminal 120 amino acid region). In terms of tissue distribution, ubiquitous.

The protein resides in the nucleus. Its function is as follows. Binds to DNA sequences containing the consensus nucleotide core sequence 5'-GGAA.-3'. In Homo sapiens (Human), this protein is ETS translocation variant 5 (ETV5).